Here is a 140-residue protein sequence, read N- to C-terminus: Cytochrome B5 isoform D (140 aa).

The Cytochrome b5 heme-binding domain maps to 5-81 (GKVFTLSEVS…LDEYYVGDID (77 aa)). Heme-binding residues include H40 and H64. A helical transmembrane segment spans residues 109 to 129 (FVIKLLQFLVPLLILGLAFGI).

It belongs to the cytochrome b5 family. In terms of assembly, interacts with CER1, BI-1, FAH1 and FAH2. Expressed in roots, stems, leaves, flowers and siliques.

Its subcellular location is the endoplasmic reticulum membrane. In terms of biological role, membrane bound hemoprotein which function as an electron carrier for several membrane bound oxygenases, including fatty acid desaturases. The protein is Cytochrome B5 isoform D of Arabidopsis thaliana (Mouse-ear cress).